The following is a 121-amino-acid chain: Large ribosomal subunit protein mL52 (121 aa).

The N-terminal 22 residues, 1 to 22 (MAALGTWLSSVRRLHCSVVARA), are a transit peptide targeting the mitochondrion. Positions 98–109 (QEERKKEHDLKP) are enriched in basic and acidic residues. Residues 98–121 (QEERKKEHDLKPKGTLLRSPLPNQ) are disordered.

Belongs to the mitochondrion-specific ribosomal protein mL52 family. As to quaternary structure, component of the mitochondrial ribosome large subunit (39S) which comprises a 16S rRNA and about 50 distinct proteins.

Its subcellular location is the mitochondrion. The polypeptide is Large ribosomal subunit protein mL52 (Mrpl52) (Mus musculus (Mouse)).